The sequence spans 194 residues: Probable thymidylate kinase (194 aa).

8 to 15 contacts ATP; that stretch reads GIDGSGKT.

The protein belongs to the thymidylate kinase family.

The catalysed reaction is dTMP + ATP = dTDP + ADP. The protein is Probable thymidylate kinase of Sulfolobus acidocaldarius (strain ATCC 33909 / DSM 639 / JCM 8929 / NBRC 15157 / NCIMB 11770).